Reading from the N-terminus, the 216-residue chain is Imidazole glycerol phosphate synthase subunit HisH 1 (216 aa).

In terms of domain architecture, Glutamine amidotransferase type-1 spans 4–216 (CVLIVDAGLG…LQNFIALNPC (213 aa)). Catalysis depends on cysteine 84, which acts as the Nucleophile. Catalysis depends on residues histidine 195 and glutamate 197.

Heterodimer of HisH and HisF.

It localises to the cytoplasm. It carries out the reaction 5-[(5-phospho-1-deoxy-D-ribulos-1-ylimino)methylamino]-1-(5-phospho-beta-D-ribosyl)imidazole-4-carboxamide + L-glutamine = D-erythro-1-(imidazol-4-yl)glycerol 3-phosphate + 5-amino-1-(5-phospho-beta-D-ribosyl)imidazole-4-carboxamide + L-glutamate + H(+). The catalysed reaction is L-glutamine + H2O = L-glutamate + NH4(+). It participates in amino-acid biosynthesis; L-histidine biosynthesis; L-histidine from 5-phospho-alpha-D-ribose 1-diphosphate: step 5/9. Its function is as follows. IGPS catalyzes the conversion of PRFAR and glutamine to IGP, AICAR and glutamate. The HisH subunit provides the glutamine amidotransferase activity that produces the ammonia necessary to HisF for the synthesis of IGP and AICAR. This is Imidazole glycerol phosphate synthase subunit HisH 1 (hisH1) from Prochlorococcus marinus (strain MIT 9313).